A 247-amino-acid chain; its full sequence is MPITSTTPEPGIVAVTVDYPPVNAIPSKAWFDLADAVTAAGANSDTRAVILRAEGRGFNAGVDIKEMQRTEGFTALIDANRGCFAAFRAVYECAVPVIAAVNGFCVGGGIGLVGNSDVIVASEDATFGLPEVERGALGAATHLSRLVPQHLMRRLFFTAATVDAATLQHFGSVHEVVSRDQLDEAALRVARDIAAKDTRVIRAAKEALNFIDVQRVNASYRMEQGFTFELNLAGVADEHRDAFVKKS.

This sequence belongs to the enoyl-CoA hydratase/isomerase family.

It carries out the reaction (7aS)-7a-methyl-1,5-dioxo-2,3,5,6,7,7a-hexahydro-1H-indene-carboxyl-CoA + H2O = (3E)-2-(2-carboxylatoethyl)-3-methyl-6-oxocyclohex-1-ene-1-carboxyl-CoA + H(+). It participates in steroid metabolism; cholesterol degradation. Its function is as follows. Involved in the final steps of cholesterol and steroid degradation. Catalyzes the hydrolytic ring D opening of (7aS)-7a-methyl-1,5-dioxo-2,3,5,6,7,7a-hexahydro-1H-indene-carboxyl-CoA (HIEC-CoA) to (3E)-2-(2-carboxylatoethyl)-3-methyl-6-oxocyclohex-1-ene-1-carboxyl-CoA (COCHEA-CoA). The chain is (7aS)-7a-methyl-1,5-dioxo-2,3,5,6,7,7a-hexahydro-1H-indene-carboxyl-CoA hydrolase from Mycobacterium tuberculosis (strain ATCC 25618 / H37Rv).